A 239-amino-acid chain; its full sequence is Ribosomal RNA small subunit methyltransferase G (239 aa).

S-adenosyl-L-methionine contacts are provided by residues Gly-77, Phe-82, 128 to 129 (AE), and Arg-147.

It belongs to the methyltransferase superfamily. RNA methyltransferase RsmG family.

It is found in the cytoplasm. Functionally, specifically methylates the N7 position of guanine in position 535 of 16S rRNA. The chain is Ribosomal RNA small subunit methyltransferase G from Bacillus mycoides (strain KBAB4) (Bacillus weihenstephanensis).